A 218-amino-acid polypeptide reads, in one-letter code: Hypoxanthine-guanine phosphoribosyltransferase (218 aa).

N-acetylalanine is present on A2. K69 is a binding site for GMP. K103 is modified (N6-acetyllysine). Residue K115 forms a Glycyl lysine isopeptide (Lys-Gly) (interchain with G-Cter in SUMO1); alternate linkage. K115 participates in a covalent cross-link: Glycyl lysine isopeptide (Lys-Gly) (interchain with G-Cter in SUMO2); alternate. GMP-binding positions include 134–142, K166, 186–188, and D194; these read EDIIDTGKT and KFV. D138 serves as the catalytic Proton acceptor. T142 carries the phosphothreonine modification. D194 provides a ligand contact to Mg(2+).

This sequence belongs to the purine/pyrimidine phosphoribosyltransferase family. As to quaternary structure, homotetramer. The cofactor is Mg(2+).

It is found in the cytoplasm. The catalysed reaction is IMP + diphosphate = hypoxanthine + 5-phospho-alpha-D-ribose 1-diphosphate. It catalyses the reaction GMP + diphosphate = guanine + 5-phospho-alpha-D-ribose 1-diphosphate. It functions in the pathway purine metabolism; IMP biosynthesis via salvage pathway; IMP from hypoxanthine: step 1/1. Its function is as follows. Converts guanine to guanosine monophosphate, and hypoxanthine to inosine monophosphate. Transfers the 5-phosphoribosyl group from 5-phosphoribosylpyrophosphate onto the purine. Plays a central role in the generation of purine nucleotides through the purine salvage pathway. This is Hypoxanthine-guanine phosphoribosyltransferase (HPRT1) from Cricetulus griseus (Chinese hamster).